The sequence spans 243 residues: Mannosyl-3-phosphoglycerate phosphatase (243 aa).

Residue D8 is the Nucleophile of the active site. The Mg(2+) site is built by D8, D10, S169, and D204.

It belongs to the HAD-like hydrolase superfamily. MPGP family. Mg(2+) serves as cofactor.

Its subcellular location is the cytoplasm. It catalyses the reaction 2-O-(alpha-D-mannosyl)-3-phosphoglycerate + H2O = (2R)-2-O-(alpha-D-mannosyl)-glycerate + phosphate. Its pathway is carbohydrate biosynthesis; 2-(alpha-D-mannosyl)-D-glycerate biosynthesis; 2-(alpha-D-mannosyl)-D-glycerate from GDP-alpha-D-mannose (MPG route): step 2/2. In terms of biological role, hydrolyzes mannosyl-3-phosphoglycerate (MPG) to form the osmolyte mannosylglycerate (MG). The enzyme is absolutely specific for MPG. The chain is Mannosyl-3-phosphoglycerate phosphatase from Pyrococcus horikoshii (strain ATCC 700860 / DSM 12428 / JCM 9974 / NBRC 100139 / OT-3).